Reading from the N-terminus, the 400-residue chain is Nicotinate phosphoribosyltransferase (400 aa).

At His220 the chain carries Phosphohistidine; by autocatalysis.

Belongs to the NAPRTase family. Transiently phosphorylated on a His residue during the reaction cycle. Phosphorylation strongly increases the affinity for substrates and increases the rate of nicotinate D-ribonucleotide production. Dephosphorylation regenerates the low-affinity form of the enzyme, leading to product release.

The enzyme catalyses nicotinate + 5-phospho-alpha-D-ribose 1-diphosphate + ATP + H2O = nicotinate beta-D-ribonucleotide + ADP + phosphate + diphosphate. It participates in cofactor biosynthesis; NAD(+) biosynthesis; nicotinate D-ribonucleotide from nicotinate: step 1/1. Its function is as follows. Catalyzes the synthesis of beta-nicotinate D-ribonucleotide from nicotinate and 5-phospho-D-ribose 1-phosphate at the expense of ATP. The chain is Nicotinate phosphoribosyltransferase from Salmonella dublin (strain CT_02021853).